The primary structure comprises 105 residues: MRNALIYPILTEKATRMTEVQTQYTFKVNPRANKLEIRKAVEEKFNVDVDSVRTVICRGKRKRQFTRKGLIEGKKSNWKKAIVTLKDGATIDFYGATASAGQANG.

This sequence belongs to the universal ribosomal protein uL23 family. In terms of assembly, part of the 50S ribosomal subunit. Contacts protein L29, and trigger factor when it is bound to the ribosome.

One of the early assembly proteins it binds 23S rRNA. One of the proteins that surrounds the polypeptide exit tunnel on the outside of the ribosome. Forms the main docking site for trigger factor binding to the ribosome. This chain is Large ribosomal subunit protein uL23, found in Chloroherpeton thalassium (strain ATCC 35110 / GB-78).